The primary structure comprises 331 residues: ADP-L-glycero-D-manno-heptose-6-epimerase (331 aa).

NADP(+) contacts are provided by residues Phe11–Ile12, Asp32–Asn33, Lys39, Lys54, Glu75–Ser79, and Asn92. Tyr139 acts as the Proton acceptor in catalysis. NADP(+) is bound at residue Lys143. A substrate-binding site is contributed by Asn168. Positions 169 and 177 each coordinate NADP(+). The Proton acceptor role is filled by Lys177. Residues Arg179, His186, Phe200–Tyr203, Arg213, and Tyr292 contribute to the substrate site.

This sequence belongs to the NAD(P)-dependent epimerase/dehydratase family. HldD subfamily. Homopentamer. It depends on NADP(+) as a cofactor.

The catalysed reaction is ADP-D-glycero-beta-D-manno-heptose = ADP-L-glycero-beta-D-manno-heptose. It participates in nucleotide-sugar biosynthesis; ADP-L-glycero-beta-D-manno-heptose biosynthesis; ADP-L-glycero-beta-D-manno-heptose from D-glycero-beta-D-manno-heptose 7-phosphate: step 4/4. Its function is as follows. Catalyzes the interconversion between ADP-D-glycero-beta-D-manno-heptose and ADP-L-glycero-beta-D-manno-heptose via an epimerization at carbon 6 of the heptose. In Ralstonia nicotianae (strain ATCC BAA-1114 / GMI1000) (Ralstonia solanacearum), this protein is ADP-L-glycero-D-manno-heptose-6-epimerase.